The sequence spans 741 residues: 2-5A-dependent ribonuclease (741 aa).

Residues 1 to 21 are disordered; it reads MESRDHNNPQEGPTSSSGRRA. The span at 9-18 shows a compositional bias: polar residues; sequence PQEGPTSSSG. 9 ANK repeats span residues 24 to 53, 58 to 87, 91 to 120, 124 to 153, 167 to 197, 201 to 234, 238 to 268, 272 to 301, and 303 to 329; these read EDNH…NVNF, GGWT…DPVL, NGAT…DVNE, YGFT…NVNL, GGAT…DVNA, MGRN…DVNV, RGKT…EIND, DGKT…STDC, and DLVM…KEDF. 2 2-5A binding (P-loop) regions span residues 229–242 and 253–275; these read GADV…GKTP and GLVQ…DGKT. Positions 365-586 constitute a Protein kinase domain; that stretch reads IDEKYKIADT…LSDLLGHPFF (222 aa). A C6-type; atypical zinc finger spans residues 395-444; that stretch reads CEGSPRAQREVSCLQSSRENSHLVTFYGSESHRGHLFVCVTLCEQTLEAC. The 135-residue stretch at 589–723 folds into the KEN domain; that stretch reads WESRYRTLRN…KHFPQTHSPN (135 aa). Lys-684 carries the N6-acetyllysine modification. Positions 715–741 are disordered; sequence HFPQTHSPNKPQCDGAGGASGLASPGC.

This sequence belongs to the protein kinase superfamily. As to quaternary structure, monomer (inactive form) or homodimer. Interacts with ABCE1; this interaction inhibits the RNASEL. It depends on Mn(2+) as a cofactor. Mg(2+) serves as cofactor. In terms of tissue distribution, highly expressed in spleen and thymus followed by prostate, testis, uterus, small intestine, colon and peripheral blood leukocytes.

The protein localises to the cytoplasm. Its subcellular location is the mitochondrion. After binding to 2-5A (5'-phosphorylated 2',5'-linked oligoadenylates) the homodimerization and subsequent activation occurs. Inhibited by RNASEL inhibitor ABCE1/RLI, a cytoplasmic member of the ATP-binding cassette (ABC) transporter family. Functionally, endoribonuclease that functions in the interferon (IFN) antiviral response. In INF treated and virus infected cells, RNASEL probably mediates its antiviral effects through a combination of direct cleavage of single-stranded viral RNAs, inhibition of protein synthesis through the degradation of rRNA, induction of apoptosis, and induction of other antiviral genes. RNASEL mediated apoptosis is the result of a JNK-dependent stress-response pathway leading to cytochrome c release from mitochondria and caspase-dependent apoptosis. Therefore, activation of RNASEL could lead to elimination of virus infected cells under some circumstances. In the crosstalk between autophagy and apoptosis proposed to induce autophagy as an early stress response to small double-stranded RNA and at later stages of prolonged stress to activate caspase-dependent proteolytic cleavage of BECN1 to terminate autophagy and promote apoptosis. Might play a central role in the regulation of mRNA turnover. Cleaves 3' of UpNp dimers, with preference for UU and UA sequences, to sets of discrete products ranging from between 4 and 22 nucleotides in length. The polypeptide is 2-5A-dependent ribonuclease (RNASEL) (Homo sapiens (Human)).